A 109-amino-acid polypeptide reads, in one-letter code: Mitochondrial import receptor subunit TOM22 homolog (109 aa).

Topologically, residues 1 to 60 (MALVRDDFDDIPDSEIHETIVERIEGLGEMFPDALRSAVHSTVDWSIWGVKGVFSLTKST) are cytoplasmic. A helical membrane pass occupies residues 61–77 (IWVVSTTSLIAFLPYII). The Mitochondrial intermembrane portion of the chain corresponds to 78-109 (EKERSDLEKTQVAQQRQMLLGPSAAIQQAKTA).

It belongs to the Tom22 family. Forms part of the preprotein translocase complex of the outer mitochondrial membrane (TOM complex).

It localises to the mitochondrion outer membrane. Functionally, central receptor component of the translocase of the outer membrane of mitochondria (TOM complex) responsible for the recognition and translocation of cytosolically synthesized mitochondrial preproteins. Together with the peripheral receptor tomm-20 functions as the transit peptide receptor and facilitates the movement of preproteins into the translocation pore. The protein is Mitochondrial import receptor subunit TOM22 homolog of Caenorhabditis elegans.